A 632-amino-acid chain; its full sequence is MPHNSYPLLHTINDPADLRLVPRAQLGALADELRAYLLHSVAKTGGHLSSNLGTVELTVALHYVFNTPHDRVVWDVGHQTYPHKILTGRRERMATLRQLGGLSGFPQRGESEYDDFGTAHSSTSISAALGMALAAKIRGEERYAIAVIGDGALTAGMAFEALNNAGVADCNLLVILNDNDMSISPPVGALNRHLAKLMSGQFYAAAKNVGKTVLKGAPPLFELAKRLEESAKGMVVPATLFEKFGFNYIGPIDGHDLDALIPTLENIKHLKGPQFLHVVTKKGQGYKLAEADPVAYHGPGKFDPAVGLQAPATSPKQTFTQVFGQWLCDMAAVDPRLVGITPAMREGSGMVEFEQRFPQRFFDVGIAEQHAVTFAAGLACEGLKPVVAIYSTFLQRGYDQLIHDVAIQNLPVVFALDRAGLVGADGATHAGAYDIPFLRCIPNVSVACPADENECRQLLSTAFAQNHPVAVRYPRGAGAGTVVQAGLEALPFGQGEIRRAGSSVAILAFGTLLHPALQVAEKLNVTVVNMRWVKPLDVALLLQVAADHDALVTVEEGAIMGGAGSAVLEALQAAGVLKPVLQLGLRDEFIEHGDPAKLLALQGLDAAGIQASITKRFAALLVPGRLALKAVA.

Thiamine diphosphate-binding positions include His78 and 119 to 121 (AHS). Residue Asp150 participates in Mg(2+) binding. Thiamine diphosphate-binding positions include 151 to 152 (GA), Asn179, Tyr286, and Glu368. Asn179 contributes to the Mg(2+) binding site.

It belongs to the transketolase family. DXPS subfamily. In terms of assembly, homodimer. Requires Mg(2+) as cofactor. Thiamine diphosphate serves as cofactor.

The enzyme catalyses D-glyceraldehyde 3-phosphate + pyruvate + H(+) = 1-deoxy-D-xylulose 5-phosphate + CO2. It functions in the pathway metabolic intermediate biosynthesis; 1-deoxy-D-xylulose 5-phosphate biosynthesis; 1-deoxy-D-xylulose 5-phosphate from D-glyceraldehyde 3-phosphate and pyruvate: step 1/1. Its function is as follows. Catalyzes the acyloin condensation reaction between C atoms 2 and 3 of pyruvate and glyceraldehyde 3-phosphate to yield 1-deoxy-D-xylulose-5-phosphate (DXP). This is 1-deoxy-D-xylulose-5-phosphate synthase from Albidiferax ferrireducens (strain ATCC BAA-621 / DSM 15236 / T118) (Rhodoferax ferrireducens).